The following is a 971-amino-acid chain: Endoplasmic reticulum calcium ATPase srcA (971 aa).

Topologically, residues 1 to 25 are cytoplasmic; it reads MNNEALAEDPPTPLWELVLEQFKDQ. Residues 26-46 form a helical membrane-spanning segment; it reads LVLILLGSAAVSFVLALFEEG. The Lumenal segment spans residues 47 to 49; it reads DDW. A helical transmembrane segment spans residues 50 to 70; the sequence is TAFVDPVVILTILILNAVVGV. The Cytoplasmic segment spans residues 71 to 217; sequence TQESSAEKAI…PTPLKQKLND (147 aa). The chain crosses the membrane as a helical span at residues 218–238; that stretch reads FGDMLAKVITVICVLVWLINV. Residues 239-262 lie on the Lumenal side of the membrane; that stretch reads EHFNDPAHGGWAKGAIYYLKIAVS. A helical transmembrane segment spans residues 263-283; sequence LGVAAIPEGLAVVITTCLALG. Ca(2+) contacts are provided by V265, A266, I268, and E270. Residues 284-718 are Cytoplasmic-facing; the sequence is TRKMAAKNAV…GRSIYSNTQQ (435 aa). The active-site 4-aspartylphosphate intermediate is D312. Residues D312 and T314 each coordinate Mg(2+). ATP-binding residues include T314, E402, R453, K473, R518, R637, and K643. Residue D662 participates in Mg(2+) binding. N665 lines the ATP pocket. The chain crosses the membrane as a helical span at residues 719–741; sequence FIRYLISSNIGEVVSIFLTAALG. Ca(2+) is bound by residues N727 and E730. Residues 742-750 lie on the Lumenal side of the membrane; sequence MPEALIPVQ. A helical membrane pass occupies residues 751–770; it reads LLWVNLVTDGLPATALSFNP. 3 residues coordinate Ca(2+): N755, T758, and D759. The Cytoplasmic segment spans residues 771-795; that stretch reads PDHDVMRRAPRKRDEPLVGGWLLFR. Residues 796–816 traverse the membrane as a helical segment; the sequence is YLAIGTYVGAATVFGYIWWFV. The Lumenal segment spans residues 817–854; the sequence is YNPEGPQISFWQLSHFHKCSAQFPEIGCEMFSNEMSRS. Residues 855 to 875 traverse the membrane as a helical segment; the sequence is ASTVSLSILVVIEMLNAMNAL. Position 867 (E867) interacts with Ca(2+). Over 876-891 the chain is Cytoplasmic; sequence SSSESLLAFPLWNNMM. Residues 892 to 912 traverse the membrane as a helical segment; that stretch reads LVYAIILSMTLHFAILYIPFL. The Lumenal portion of the chain corresponds to 913–917; it reads QTLFS. A helical transmembrane segment spans residues 918–938; sequence ILPLNWTEWKAVLAISAPVVA. The Cytoplasmic segment spans residues 939 to 971; that stretch reads IDELLKYAERRLYTLPAIAGEQQNGVAFKPKKA.

This sequence belongs to the cation transport ATPase (P-type) (TC 3.A.3) family. The cofactor is Mg(2+).

The protein resides in the endoplasmic reticulum membrane. The catalysed reaction is Ca(2+)(in) + ATP + H2O = Ca(2+)(out) + ADP + phosphate + H(+). Magnesium-dependent enzyme catalyzes the hydrolysis of ATP coupled with the translocation of calcium from the cytosol to the endoplasmic reticulum lumen. Its activity is coupled to the unfolded protein response (UPR) and Ca(2+) import into the endoplasmioc reticulum is important for redox homeostasis, virulence, cell wall biosynthesis, and resistance to antifungal compounds that inhibit Ca2+ signaling. With pmrA, promotes radial growth and conidiation. This is Endoplasmic reticulum calcium ATPase srcA (srcA) from Aspergillus fumigatus (strain ATCC MYA-4609 / CBS 101355 / FGSC A1100 / Af293) (Neosartorya fumigata).